A 133-amino-acid chain; its full sequence is Interleukin-4 (133 aa).

The first 24 residues, 1 to 24, serve as a signal peptide directing secretion; the sequence is MGLTSQLIPTLVCLLVCTSNFAHG. Disulfide bonds link Cys27–Cys133, Cys48–Cys85, and Cys70–Cys105. N-linked (GlcNAc...) asparagine glycans are attached at residues Asn62, Asn96, Asn102, and Asn108.

The protein belongs to the IL-4/IL-13 family.

Its subcellular location is the secreted. Its function is as follows. Participates in at least several B-cell activation processes as well as of other cell types. It is a costimulator of DNA-synthesis. It induces the expression of class II MHC molecules on resting B-cells. It enhances both secretion and cell surface expression of IgE and IgG1. It also regulates the expression of the low affinity Fc receptor for IgE (CD23) on both lymphocytes and monocytes. Positively regulates IL31RA expression in macrophages. Stimulates autophagy in dendritic cells by interfering with mTORC1 signaling and through the induction of RUFY4. This is Interleukin-4 (IL4) from Lama glama (Llama).